A 397-amino-acid chain; its full sequence is Succinate--CoA ligase [ADP-forming] subunit beta (397 aa).

The ATP-grasp domain occupies 9 to 254 (KALLKSFGAP…ETEQDAKELE (246 aa)). ATP-binding positions include Lys46, 53-55 (GRG), Glu109, Ala112, and Glu117. Mg(2+) contacts are provided by Asn209 and Asp223. Residues Asn274 and 331 to 333 (GIM) contribute to the substrate site.

The protein belongs to the succinate/malate CoA ligase beta subunit family. As to quaternary structure, heterotetramer of two alpha and two beta subunits. Mg(2+) is required as a cofactor.

It carries out the reaction succinate + ATP + CoA = succinyl-CoA + ADP + phosphate. The enzyme catalyses GTP + succinate + CoA = succinyl-CoA + GDP + phosphate. It functions in the pathway carbohydrate metabolism; tricarboxylic acid cycle; succinate from succinyl-CoA (ligase route): step 1/1. Functionally, succinyl-CoA synthetase functions in the citric acid cycle (TCA), coupling the hydrolysis of succinyl-CoA to the synthesis of either ATP or GTP and thus represents the only step of substrate-level phosphorylation in the TCA. The beta subunit provides nucleotide specificity of the enzyme and binds the substrate succinate, while the binding sites for coenzyme A and phosphate are found in the alpha subunit. The protein is Succinate--CoA ligase [ADP-forming] subunit beta of Hyphomonas neptunium (strain ATCC 15444).